The chain runs to 304 residues: Mitochondrial glycine transporter (304 aa).

3 Solcar repeats span residues 25–114, 121–205, and 215–299; these read HPVI…LKQY, PTAL…TKNI, and LIPI…MMAK. 6 helical membrane passes run 31 to 56, 89 to 115, 127 to 152, 180 to 203, 219 to 245, and 274 to 292; these read FLCG…TRLQ, GMSP…KQYF, VMLG…TRYE, GLTA…NQTK, TNFS…KTHM, and GGIP…AWTV.

The protein belongs to the mitochondrial carrier (TC 2.A.29) family. SLC25A38 subfamily. In terms of tissue distribution, preferentially expressed in erythroid cells.

The protein resides in the mitochondrion inner membrane. It carries out the reaction glycine(in) = glycine(out). Its function is as follows. Mitochondrial glycine transporter that imports glycine into the mitochondrial matrix. Plays an important role in providing glycine for the first enzymatic step in heme biosynthesis, the condensation of glycine with succinyl-CoA to produce 5-aminolevulinate (ALA) in the mitochondrial matrix. Required during erythropoiesis. In terms of biological role, plays a role as pro-apoptotic protein that induces caspase-dependent apoptosis. In Homo sapiens (Human), this protein is Mitochondrial glycine transporter.